We begin with the raw amino-acid sequence, 239 residues long: 2-C-methyl-D-erythritol 4-phosphate cytidylyltransferase (239 aa).

Belongs to the IspD/TarI cytidylyltransferase family. IspD subfamily.

The catalysed reaction is 2-C-methyl-D-erythritol 4-phosphate + CTP + H(+) = 4-CDP-2-C-methyl-D-erythritol + diphosphate. It participates in isoprenoid biosynthesis; isopentenyl diphosphate biosynthesis via DXP pathway; isopentenyl diphosphate from 1-deoxy-D-xylulose 5-phosphate: step 2/6. In terms of biological role, catalyzes the formation of 4-diphosphocytidyl-2-C-methyl-D-erythritol from CTP and 2-C-methyl-D-erythritol 4-phosphate (MEP). The protein is 2-C-methyl-D-erythritol 4-phosphate cytidylyltransferase of Acidobacterium capsulatum (strain ATCC 51196 / DSM 11244 / BCRC 80197 / JCM 7670 / NBRC 15755 / NCIMB 13165 / 161).